The primary structure comprises 39 residues: Potassium channel toxin alpha-KTx 2.9 (39 aa).

3 disulfide bridges follow: Cys-7–Cys-29, Cys-13–Cys-34, and Cys-17–Cys-36. Asparagine amide is present on Asn-39.

Belongs to the short scorpion toxin superfamily. Potassium channel inhibitor family. Alpha-KTx 02 subfamily. Expressed by the venom gland.

It is found in the secreted. Blocks Kv1.3/KCNA3 voltage-gated potassium channels of human T-lymphocytes (Kd=0.25 nM). This is Potassium channel toxin alpha-KTx 2.9 from Centruroides elegans (Bark scorpion).